Consider the following 405-residue polypeptide: Magnesium-protoporphyrin IX monomethyl ester [oxidative] cyclase, chloroplastic (405 aa).

Residues 1-44 (MAAEMALVKPITPKFINPMRTFSSSSKFSTIKMSATSQSNTTTT) constitute a chloroplast transit peptide. Residues 33–47 (MSATSQSNTTTTATK) are compositionally biased toward low complexity. The segment at 33–54 (MSATSQSNTTTTATKPSKKGNK) is disordered.

Belongs to the AcsF family. The cofactor is Fe cation.

Its subcellular location is the plastid. The protein resides in the chloroplast. It carries out the reaction Mg-protoporphyrin IX 13-monomethyl ester + 3 NADPH + 3 O2 + 2 H(+) = 3,8-divinyl protochlorophyllide a + 3 NADP(+) + 5 H2O. It participates in porphyrin-containing compound metabolism; chlorophyll biosynthesis. Catalyzes the formation of the isocyclic ring in chlorophyll biosynthesis. Mediates the cyclase reaction, which results in the formation of divinylprotochlorophyllide (Pchlide) characteristic of all chlorophylls from magnesium-protoporphyrin IX 13-monomethyl ester (MgPMME). The sequence is that of Magnesium-protoporphyrin IX monomethyl ester [oxidative] cyclase, chloroplastic (CRD1) from Euphorbia esula (Leafy spurge).